A 129-amino-acid polypeptide reads, in one-letter code: Glycine cleavage system H protein (129 aa).

Positions isoleucine 24–arginine 106 constitute a Lipoyl-binding domain. Position 65 is an N6-lipoyllysine (lysine 65).

It belongs to the GcvH family. The glycine cleavage system is composed of four proteins: P, T, L and H. Requires (R)-lipoate as cofactor.

Its function is as follows. The glycine cleavage system catalyzes the degradation of glycine. The H protein shuttles the methylamine group of glycine from the P protein to the T protein. The protein is Glycine cleavage system H protein of Synechococcus sp. (strain JA-3-3Ab) (Cyanobacteria bacterium Yellowstone A-Prime).